The primary structure comprises 82 residues: Endocuticle structural protein SgAbd-6 (82 aa).

Gln-1 is subject to Pyrrolidone carboxylic acid. One can recognise a Chitin-binding type R&amp;R domain in the interval 18–82; it reads LGQYTFGFKT…ENGFQPQYTQ (65 aa).

In terms of biological role, component of the abdominal endocuticle. The polypeptide is Endocuticle structural protein SgAbd-6 (Schistocerca gregaria (Desert locust)).